A 216-amino-acid chain; its full sequence is Serine acetyltransferase (216 aa).

The protein belongs to the transferase hexapeptide repeat family.

The protein localises to the cytoplasm. The enzyme catalyses L-serine + acetyl-CoA = O-acetyl-L-serine + CoA. It participates in amino-acid biosynthesis; L-cysteine biosynthesis; L-cysteine from L-serine: step 1/2. The polypeptide is Serine acetyltransferase (cysE) (Staphylococcus xylosus).